Here is an 88-residue protein sequence, read N- to C-terminus: uncharacterized protein (88 aa).

Positions 1 to 25 (MRAAFWVGCAALLLSACSSEPVQQA) are cleaved as a signal peptide.

This is an uncharacterized protein from Escherichia coli O6:H1 (strain CFT073 / ATCC 700928 / UPEC).